An 80-amino-acid polypeptide reads, in one-letter code: UPF0248 protein M1425_2629 (80 aa).

It belongs to the UPF0248 family.

This chain is UPF0248 protein M1425_2629, found in Saccharolobus islandicus (strain M.14.25 / Kamchatka #1) (Sulfolobus islandicus).